The sequence spans 149 residues: Ribosome-binding factor A (149 aa).

The disordered stretch occupies residues 125-149 (FGSADEVLNEDEGATDDTDDTKGKD). The segment covering 131–143 (VLNEDEGATDDTD) has biased composition (acidic residues).

This sequence belongs to the RbfA family. As to quaternary structure, monomer. Binds 30S ribosomal subunits, but not 50S ribosomal subunits or 70S ribosomes.

The protein resides in the cytoplasm. Functionally, one of several proteins that assist in the late maturation steps of the functional core of the 30S ribosomal subunit. Associates with free 30S ribosomal subunits (but not with 30S subunits that are part of 70S ribosomes or polysomes). Required for efficient processing of 16S rRNA. May interact with the 5'-terminal helix region of 16S rRNA. This is Ribosome-binding factor A from Shewanella sp. (strain W3-18-1).